A 338-amino-acid polypeptide reads, in one-letter code: Anthranilate phosphoribosyltransferase (338 aa).

5-phospho-alpha-D-ribose 1-diphosphate contacts are provided by residues glycine 81, glycine 84 to aspartate 85, threonine 89, asparagine 91 to threonine 94, lysine 109 to serine 117, and alanine 121. Glycine 81 is an anthranilate binding site. Serine 93 provides a ligand contact to Mg(2+). Asparagine 112 provides a ligand contact to anthranilate. Arginine 167 is an anthranilate binding site. The Mg(2+) site is built by aspartate 226 and glutamate 227.

This sequence belongs to the anthranilate phosphoribosyltransferase family. Homodimer. It depends on Mg(2+) as a cofactor.

It catalyses the reaction N-(5-phospho-beta-D-ribosyl)anthranilate + diphosphate = 5-phospho-alpha-D-ribose 1-diphosphate + anthranilate. It functions in the pathway amino-acid biosynthesis; L-tryptophan biosynthesis; L-tryptophan from chorismate: step 2/5. Catalyzes the transfer of the phosphoribosyl group of 5-phosphorylribose-1-pyrophosphate (PRPP) to anthranilate to yield N-(5'-phosphoribosyl)-anthranilate (PRA). This chain is Anthranilate phosphoribosyltransferase, found in Cereibacter sphaeroides (strain KD131 / KCTC 12085) (Rhodobacter sphaeroides).